We begin with the raw amino-acid sequence, 396 residues long: Probable sugar efflux transporter (396 aa).

A run of 12 helical transmembrane segments spans residues 15 to 35 (VVTLAIAAFIFNTTEFVPVGL), 50 to 70 (VGIMLTIYAWVVAVMSLPFML), 81 to 101 (LICLFVLFIASHVLSFLAWNF), 103 to 123 (VLVISRIGIAFAHAIFWSITA), 136 to 156 (AQALSLIATGTALAMVLGLPI), 169 to 189 (TFFAIGMGALITLLCLIKLLP), 209 to 229 (PALMSLYVLTVVVVTAHYTAY), 246 to 266 (FATVLLLILGGAGIIGSLVFG), 275 to 295 (SLVSIAIALLVVCLLLLLPAA), 301 to 321 (LAILSIFWGIAIMVIGLGMQV), 333 to 353 (VAMALFSGIFNIGIGAGALVG), and 364 to 384 (AIGYIGAIPACAALVWAVLIF).

The protein belongs to the major facilitator superfamily. SotB (TC 2.A.1.2) family.

The protein localises to the cell inner membrane. Its function is as follows. Involved in the efflux of sugars. The physiological role may be the reduction of the intracellular concentration of toxic sugars or sugar metabolites. The chain is Probable sugar efflux transporter from Salmonella agona (strain SL483).